The primary structure comprises 342 residues: MLKFIQNNREITALLAVVLLFVLPGFLDRQYLSVQTLTMVYSSAQILILLAMGATLVMLTRNIDVSVGSITGMCAVLLGMLLNAGYSLPVACVATLLLGLLAGFFNGALVAWLKIPAIVATLGTLGLYRGIMLLWTGGKWIEGLPAELKQLSAPLLLGISAIGWLTIILVAFMAWLLAKTAFGRSFYATGDNLQGARQLGVRTEAIRIVAFSLNGCMAALAGIVFASQIGFILNQTGTGLEMKAIAACVLGGISLLGGSGAIIGAVLGAWFLTQIDSVLVLLRIPAWWNDFIAGLVLLAVLVFDGRLRCALERNLRRQKYARFMTPPPSVKPASSGKKREAA.

The Periplasmic portion of the chain corresponds to 1-13; the sequence is MLKFIQNNREITA. A helical membrane pass occupies residues 14–34; that stretch reads LLAVVLLFVLPGFLDRQYLSV. Residues 35–38 are Cytoplasmic-facing; sequence QTLT. The chain crosses the membrane as a helical span at residues 39 to 59; sequence MVYSSAQILILLAMGATLVML. Over 60–69 the chain is Periplasmic; the sequence is TRNIDVSVGS. Residues 70–90 form a helical membrane-spanning segment; the sequence is ITGMCAVLLGMLLNAGYSLPV. Over 91 to 92 the chain is Cytoplasmic; the sequence is AC. A helical transmembrane segment spans residues 93–113; it reads VATLLLGLLAGFFNGALVAWL. Residue Lys-114 is a topological domain, periplasmic. A helical membrane pass occupies residues 115-135; it reads IPAIVATLGTLGLYRGIMLLW. Residues 136-154 lie on the Cytoplasmic side of the membrane; the sequence is TGGKWIEGLPAELKQLSAP. The chain crosses the membrane as a helical span at residues 155-175; that stretch reads LLLGISAIGWLTIILVAFMAW. The Periplasmic portion of the chain corresponds to 176–212; it reads LLAKTAFGRSFYATGDNLQGARQLGVRTEAIRIVAFS. The helical transmembrane segment at 213–233 threads the bilayer; it reads LNGCMAALAGIVFASQIGFIL. At 234-251 the chain is on the cytoplasmic side; sequence NQTGTGLEMKAIAACVLG. The helical transmembrane segment at 252–272 threads the bilayer; sequence GISLLGGSGAIIGAVLGAWFL. At 273 to 283 the chain is on the periplasmic side; sequence TQIDSVLVLLR. Residues 284 to 304 form a helical membrane-spanning segment; that stretch reads IPAWWNDFIAGLVLLAVLVFD. Topologically, residues 305-342 are cytoplasmic; that stretch reads GRLRCALERNLRRQKYARFMTPPPSVKPASSGKKREAA.

Belongs to the binding-protein-dependent transport system permease family. AraH/RbsC subfamily. As to quaternary structure, the complex is composed of two ATP-binding proteins (LsrA), two transmembrane proteins (LsrC and LsrD) and a solute-binding protein (LsrB).

It localises to the cell inner membrane. Part of the ABC transporter complex LsrABCD involved in autoinducer 2 (AI-2) import. Probably responsible for the translocation of the substrate across the membrane. The polypeptide is Autoinducer 2 import system permease protein LsrC (lsrC) (Shigella flexneri).